The primary structure comprises 419 residues: Tyrosine--tRNA ligase (419 aa).

Tyr34 lines the L-tyrosine pocket. Positions 39–48 match the 'HIGH' region motif; sequence PSGDSMHIGH. Tyr168 and Gln172 together coordinate L-tyrosine. The 'KMSKS' region motif lies at 230 to 234; it reads KFGKS. Lys233 contacts ATP. Positions 352–418 constitute an S4 RNA-binding domain; that stretch reads VNLVDWLVTL…GKKKYFLVSY (67 aa).

It belongs to the class-I aminoacyl-tRNA synthetase family. TyrS type 1 subfamily. Homodimer.

The protein localises to the cytoplasm. The catalysed reaction is tRNA(Tyr) + L-tyrosine + ATP = L-tyrosyl-tRNA(Tyr) + AMP + diphosphate + H(+). Catalyzes the attachment of tyrosine to tRNA(Tyr) in a two-step reaction: tyrosine is first activated by ATP to form Tyr-AMP and then transferred to the acceptor end of tRNA(Tyr). This is Tyrosine--tRNA ligase from Listeria innocua serovar 6a (strain ATCC BAA-680 / CLIP 11262).